A 134-amino-acid polypeptide reads, in one-letter code: Small ribosomal subunit protein uS11 (134 aa).

Positions 114–134 are disordered; sequence DVTPVPSDSTRRKGGRRGRRL. Residues 125 to 134 show a composition bias toward basic residues; the sequence is RKGGRRGRRL.

This sequence belongs to the universal ribosomal protein uS11 family.

The protein is Small ribosomal subunit protein uS11 (RPS14) of Candida albicans (Yeast).